The primary structure comprises 38 residues: Alpha-conotoxin LvIC (38 aa).

Residues 1-21 (SNGRNAAAGDKPSYWITLAIT) constitute a propeptide that is removed on maturation. Cystine bridges form between cysteine 23-cysteine 29 and cysteine 24-cysteine 34. Position 35 is a glutamine amide (glutamine 35).

Belongs to the conotoxin A superfamily. In terms of processing, the two analogs ([DelQ14]LvIC and [D1G,DelQ14]LvIC) are amidated at their N-terminal Cys. Expressed by the venom gland.

The protein resides in the secreted. Its function is as follows. Alpha-conotoxins bind to the nicotinic acetylcholine receptors (nAChR) and inhibit them. This synthetic peptide inhibits rat alpha-6/alpha-3-beta-4 nAChR (IC(50)=3.3 uM). This is Alpha-conotoxin LvIC from Conus lividus (Livid cone).